The sequence spans 213 residues: Protein SRN2 (213 aa).

The VPS37 C-terminal domain occupies serine 128–tyrosine 213.

It belongs to the VPS37 family. Component of the ESCRT-I complex (endosomal sorting complex required for transport I) which consists of STP22, VPS28, SRN2 and MVB12 in a 1:1:1:1 stoichiometry. Interacts with STP22 and MVB12.

The protein resides in the cytoplasm. The protein localises to the endosome. It is found in the late endosome membrane. Component of the ESCRT-I complex, a regulator of vesicular trafficking process. Required for normal endocytic and biosynthetic traffic to the yeast vacuole. The polypeptide is Protein SRN2 (SRN2) (Saccharomyces cerevisiae (strain ATCC 204508 / S288c) (Baker's yeast)).